Here is a 273-residue protein sequence, read N- to C-terminus: Large ribosomal subunit protein uL2 (273 aa).

Disordered stretches follow at residues 35–54 (DKKD…TRHI) and 222–273 (GMAM…RRNK). The span at 229 to 239 (DHPHGGGEGRN) shows a compositional bias: basic and acidic residues. Over residues 253 to 273 (KGFKTRKNKRTDKYIVRRRNK) the composition is skewed to basic residues.

This sequence belongs to the universal ribosomal protein uL2 family. In terms of assembly, part of the 50S ribosomal subunit. Forms a bridge to the 30S subunit in the 70S ribosome.

One of the primary rRNA binding proteins. Required for association of the 30S and 50S subunits to form the 70S ribosome, for tRNA binding and peptide bond formation. It has been suggested to have peptidyltransferase activity; this is somewhat controversial. Makes several contacts with the 16S rRNA in the 70S ribosome. This chain is Large ribosomal subunit protein uL2, found in Aeromonas hydrophila subsp. hydrophila (strain ATCC 7966 / DSM 30187 / BCRC 13018 / CCUG 14551 / JCM 1027 / KCTC 2358 / NCIMB 9240 / NCTC 8049).